We begin with the raw amino-acid sequence, 97 residues long: Sorbitol dehydrogenase (97 aa).

Cys-44 provides a ligand contact to Zn(2+). Tyr-50 contacts substrate. Zn(2+) is bound by residues His-69 and Glu-70.

Belongs to the zinc-containing alcohol dehydrogenase family. In terms of assembly, homotetramer. Zn(2+) serves as cofactor.

The protein localises to the mitochondrion membrane. It is found in the cell projection. Its subcellular location is the cilium. The protein resides in the flagellum. The catalysed reaction is xylitol + NAD(+) = D-xylulose + NADH + H(+). It catalyses the reaction L-iditol + NAD(+) = keto-L-sorbose + NADH + H(+). It carries out the reaction keto-D-fructose + NADH + H(+) = D-sorbitol + NAD(+). Polyol dehydrogenase that catalyzes the reversible NAD(+)-dependent oxidation of various sugar alcohols. Is active with xylitol, L-iditol and D-sorbitol (D-glucitol) as substrates, leading to the C2-oxidized products D-xylulose, L-sorbose and D-fructose, respectively. Is a key enzyme in the polyol pathway that interconverts glucose and fructose via sorbitol, which constitutes an important alternate route for glucose metabolism. May play a role in sperm motility by using sorbitol as an alternative energy source for sperm motility. This Sus scrofa (Pig) protein is Sorbitol dehydrogenase (SORD).